Reading from the N-terminus, the 415-residue chain is BTB/POZ and MATH domain-containing protein 6 (415 aa).

The disordered stretch occupies residues 1-33 (MSKLMTRTSGSSSPNTIPDQIESPTSSRSVTQT). In terms of domain architecture, MATH spans 35 to 169 (NGSHQFVIQG…DDCLKINCTV (135 aa)). Residues 205–271 (SDVTFDVAGE…MYKDSLPGDV (67 aa)) enclose the BTB domain. The interval 385–415 (SSSGGGKSQSVWAQLSNGGETSSRRVRQRTT) is disordered. The segment covering 392–405 (SQSVWAQLSNGGET) has biased composition (polar residues).

Belongs to the Tdpoz family. As to quaternary structure, heterodimer with BPM1. Interacts with RAP2-4. Interacts with CUL3A. Binds to MYB56 at the promoter of FLOWERING LOCUS T (FT). Ubiquitous.

Its subcellular location is the nucleus. The protein resides in the cytoplasm. The protein operates within protein modification; protein ubiquitination. Functionally, may act as a substrate-specific adapter of an E3 ubiquitin-protein ligase complex (CUL3-RBX1-BTB) which mediates the ubiquitination and subsequent proteasomal degradation of target proteins. In Arabidopsis thaliana (Mouse-ear cress), this protein is BTB/POZ and MATH domain-containing protein 6 (BPM6).